Here is a 317-residue protein sequence, read N- to C-terminus: Methionyl-tRNA formyltransferase (317 aa).

109 to 112 (SLLP) serves as a coordination point for (6S)-5,6,7,8-tetrahydrofolate.

It belongs to the Fmt family.

The enzyme catalyses L-methionyl-tRNA(fMet) + (6R)-10-formyltetrahydrofolate = N-formyl-L-methionyl-tRNA(fMet) + (6S)-5,6,7,8-tetrahydrofolate + H(+). Attaches a formyl group to the free amino group of methionyl-tRNA(fMet). The formyl group appears to play a dual role in the initiator identity of N-formylmethionyl-tRNA by promoting its recognition by IF2 and preventing the misappropriation of this tRNA by the elongation apparatus. The sequence is that of Methionyl-tRNA formyltransferase from Desulforamulus reducens (strain ATCC BAA-1160 / DSM 100696 / MI-1) (Desulfotomaculum reducens).